The following is a 1260-amino-acid chain: Agglutinin-like protein 1 (1260 aa).

The N-terminal stretch at 1-17 (MLQQFTLLFLYLSIASA) is a signal peptide. Intrachain disulfides connect C73/C150, C96/C112, C205/C298, and C227/C256. A run of 10 repeats spans residues 433–468 (SPNP…IIRE), 469–504 (PPNH…IIRE), 505–540 (PPNP…IIRE), 541–576 (PPNP…IIRE), 577–612 (PPNH…IIRE), 613–648 (PPNH…IIRE), 649–684 (PPNP…LIRE), 685–720 (PPNH…LIRE), 721–756 (PPNH…IIRE), and 757–792 (PPNP…IIYE). The tract at residues 433-792 (SPNPTVSTTE…GGTDTVIIYE (360 aa)) is 10 X 36 AA tandem repeats. N471 carries an N-linked (GlcNAc...) asparagine glycan. N579 and N615 each carry an N-linked (GlcNAc...) asparagine glycan. 2 N-linked (GlcNAc...) asparagine glycosylation sites follow: N687 and N723. N820, N886, N918, and N973 each carry an N-linked (GlcNAc...) asparagine glycan. Composition is skewed to polar residues over residues 896–918 (PTAS…SSDN) and 964–979 (KVTF…GTHD). 2 disordered regions span residues 896–924 (PTAS…KSGV) and 954–1226 (SIPS…SSSP). Residues 980–995 (SQSTSTEIEIVTTSST) are compositionally biased toward low complexity. One copy of the 2-1 repeat lies at 983–1043 (TSTEIEIVTT…TTSQPTGDNG (61 aa)). The interval 983–1152 (TSTEIEIVTT…ATTQATNENG (170 aa)) is 2 X 26 AA approximate repeats. Polar residues predominate over residues 1002–1062 (VSSNTDLTSE…PTVATSTLAS (61 aa)). N-linked (GlcNAc...) asparagine glycans are attached at residues N1045 and N1068. Residues 1073 to 1090 (HESASTSLKPSMGENSGL) show a composition bias toward polar residues. Over residues 1091 to 1110 (TTSTEIEATTTSPTEAPSPA) the composition is skewed to low complexity. A 2-2 repeat occupies 1092–1152 (TSTEIEATTT…ATTQATNENG (61 aa)). Positions 1111–1154 (VSSGTDVTTEPTDTREQPTTLSTTSKTNSESVATTQATNENGGK) are enriched in polar residues. Composition is skewed to low complexity over residues 1155–1176 (SPST…SANS) and 1197–1226 (SHST…SSSP).

Belongs to the ALS family. N-glycosylated and O-glycosylated. In terms of processing, the GPI-anchor is attached to the protein in the endoplasmic reticulum and serves to target the protein to the cell surface. There, the glucosamine-inositol phospholipid moiety is cleaved off and the GPI-modified mannoprotein is covalently attached via its lipidless GPI glycan remnant to the 1,6-beta-glucan of the outer cell wall layer.

Its subcellular location is the cell membrane. The protein localises to the secreted. It is found in the cell wall. In terms of biological role, major cell surface adhesion protein which mediates both yeast-to-host tissue adherence and yeast aggregation. Acts as a downstream effector of the EFG1 regulatory pathway. Required for rapamycin-induced aggregation of C.albicans. Binds glycans and mediates adherence to endothelial and epithelial cells, thereby playing an important role in the pathogenesis of C.albicans infections. This is Agglutinin-like protein 1 (ALS1) from Candida albicans (Yeast).